A 471-amino-acid chain; its full sequence is 3-isopropylmalate dehydratase large subunit (471 aa).

[4Fe-4S] cluster contacts are provided by C349, C409, and C412.

The protein belongs to the aconitase/IPM isomerase family. LeuC type 1 subfamily. Heterodimer of LeuC and LeuD. Requires [4Fe-4S] cluster as cofactor.

The enzyme catalyses (2R,3S)-3-isopropylmalate = (2S)-2-isopropylmalate. It functions in the pathway amino-acid biosynthesis; L-leucine biosynthesis; L-leucine from 3-methyl-2-oxobutanoate: step 2/4. Functionally, catalyzes the isomerization between 2-isopropylmalate and 3-isopropylmalate, via the formation of 2-isopropylmaleate. The chain is 3-isopropylmalate dehydratase large subunit from Aliivibrio salmonicida (strain LFI1238) (Vibrio salmonicida (strain LFI1238)).